The following is a 173-amino-acid chain: Avenin-like a5 (173 aa).

A signal peptide spans 1–19 (MKTMLILALIALAATSVVA).

It belongs to the prolamin family. In terms of processing, contains 7 disulfide bonds.

Its function is as follows. Seed storage protein. Not integrated in the gluten polymer through disulfide bonds, unless incorporated by reduction and reoxidation during dough making. Increases dough strength and bread volume, but decreases dough stability when added into a base wheat flour. This chain is Avenin-like a5, found in Triticum aestivum (Wheat).